The following is a 392-amino-acid chain: 23S rRNA (uracil(747)-C(5))-methyltransferase RlmC (392 aa).

Cys4, Cys12, Cys15, and Cys93 together coordinate [4Fe-4S] cluster. Residues Gln218, Phe247, Glu275, and Asn321 each contribute to the S-adenosyl-L-methionine site. The active-site Nucleophile is the Cys348.

The protein belongs to the class I-like SAM-binding methyltransferase superfamily. RNA M5U methyltransferase family. RlmC subfamily.

It carries out the reaction uridine(747) in 23S rRNA + S-adenosyl-L-methionine = 5-methyluridine(747) in 23S rRNA + S-adenosyl-L-homocysteine + H(+). Its function is as follows. Catalyzes the formation of 5-methyl-uridine at position 747 (m5U747) in 23S rRNA. This chain is 23S rRNA (uracil(747)-C(5))-methyltransferase RlmC, found in Haemophilus influenzae (strain ATCC 51907 / DSM 11121 / KW20 / Rd).